The chain runs to 29 residues: Ceratotoxin-B (29 aa).

Homomer of four to six subunits.

The protein resides in the secreted. Its function is as follows. Female-specific peptides with potent activity against Gram-positive and Gram-negative bacteria. They have as well hemolytic activity. This chain is Ceratotoxin-B (CTXB), found in Ceratitis capitata (Mediterranean fruit fly).